A 227-amino-acid polypeptide reads, in one-letter code: Iron-regulated surface determinant protein C (227 aa).

An N-terminal signal peptide occupies residues 1–28 (MKNILKVFNTTILALIIIIATFSNSANA). Positions 29-150 (ADSGTLNYEV…KFNGPTDVAG (122 aa)) constitute an NEAT domain. Residues Ser-47, Ile-48, Tyr-132, and Tyr-136 each contribute to the heme site. The disordered stretch occupies residues 149 to 191 (AGANAPGKDDKNSASGSDKGSDGATTGQSESNSSNKDKVENPQ). Low complexity predominate over residues 161–172 (SASGSDKGSDGA). Polar residues predominate over residues 173-182 (TTGQSESNSS). The NPQTN sorting signal signature appears at 189-193 (NPQTN). Thr-192 carries the post-translational modification Pentaglycyl murein peptidoglycan amidated threonine. Residues 193 to 227 (NAGTPAYIYAIPVASLALLIAITLFVRKKSKGNVE) constitute a propeptide, removed by sortase B.

The protein belongs to the IsdC family. Monomer. Interacts with IsdA.

It is found in the secreted. The protein resides in the cell wall. Its function is as follows. Involved in heme (porphyrin) scavenging. Binds hemoglobin and almost exclusively free-base protoporphyrin IX. Probably has a role as the central conduit of the isd heme uptake system, i.e. mediates the transfer of the iron-containing nutrient from IsdABH to the membrane translocation system IsdDEF. Hemin-free IsdC (apo-IsdC) acquires hemin from hemin-containing IsdA (holo-IsdA) probably through the activated holo-IsdA-apo-IsdC complex and due to the higher affinity of apo-IsdC for the cofactor. The reaction is reversible. This chain is Iron-regulated surface determinant protein C (isdC), found in Staphylococcus aureus (strain bovine RF122 / ET3-1).